Consider the following 346-residue polypeptide: Large ribosomal subunit protein uL1c (346 aa).

A chloroplast-targeting transit peptide spans 1–70; that stretch reads MAACATHSSL…RASNHKFIVS (70 aa). The residue at position 129 (Tyr129) is a Phosphotyrosine. Phosphothreonine is present on Thr177. At Ser197 the chain carries Phosphoserine.

The protein belongs to the universal ribosomal protein uL1 family. In terms of assembly, part of the 50S ribosomal subunit.

The protein localises to the plastid. It localises to the chloroplast. In terms of biological role, this protein binds directly to 23S ribosomal RNA. In Arabidopsis thaliana (Mouse-ear cress), this protein is Large ribosomal subunit protein uL1c (RPL1).